The following is a 274-amino-acid chain: Ribosomal RNA small subunit methyltransferase A (274 aa).

Asparagine 20, leucine 22, glycine 47, glutamate 68, aspartate 90, and asparagine 110 together coordinate S-adenosyl-L-methionine.

This sequence belongs to the class I-like SAM-binding methyltransferase superfamily. rRNA adenine N(6)-methyltransferase family. RsmA subfamily.

The protein resides in the cytoplasm. The catalysed reaction is adenosine(1518)/adenosine(1519) in 16S rRNA + 4 S-adenosyl-L-methionine = N(6)-dimethyladenosine(1518)/N(6)-dimethyladenosine(1519) in 16S rRNA + 4 S-adenosyl-L-homocysteine + 4 H(+). Its function is as follows. Specifically dimethylates two adjacent adenosines (A1518 and A1519) in the loop of a conserved hairpin near the 3'-end of 16S rRNA in the 30S particle. May play a critical role in biogenesis of 30S subunits. The chain is Ribosomal RNA small subunit methyltransferase A from Chlorobaculum parvum (strain DSM 263 / NCIMB 8327) (Chlorobium vibrioforme subsp. thiosulfatophilum).